A 144-amino-acid chain; its full sequence is Androgenic gland hormone (144 aa).

A signal peptide spans 1–21 (MKGLVILVSLMCLALYNRICA). Cystine bridges form between Cys-33-Cys-123, Cys-42-Cys-59, Cys-44-Cys-141, and Cys-124-Cys-132. Positions 68 to 113 (SAPEDELAFEDYEDQDYFHPRALSIPSEIEHDNEKESDAFSILSRG) are cleaved as a propeptide — c peptide. An N-linked (GlcNAc...) (complex) asparagine glycan is attached at Asn-133.

As to expression, androgenic gland.

It is found in the secreted. Controls sex differentiation and the formation of male appendages, spermatogenesis, pigmentation, and male specific behavior. This Armadillidium vulgare (Pillbug) protein is Androgenic gland hormone.